Consider the following 177-residue polypeptide: Ribosome maturation factor RimM (177 aa).

In terms of domain architecture, PRC barrel spans 104 to 177 (GVDGIWADLI…IIKVKLMEGM (74 aa)).

It belongs to the RimM family. In terms of assembly, binds ribosomal protein uS19.

Its subcellular location is the cytoplasm. Its function is as follows. An accessory protein needed during the final step in the assembly of 30S ribosomal subunit, possibly for assembly of the head region. Essential for efficient processing of 16S rRNA. May be needed both before and after RbfA during the maturation of 16S rRNA. It has affinity for free ribosomal 30S subunits but not for 70S ribosomes. This is Ribosome maturation factor RimM from Magnetococcus marinus (strain ATCC BAA-1437 / JCM 17883 / MC-1).